The following is a 201-amino-acid chain: ATP-dependent Clp protease proteolytic subunit 1 (201 aa).

S102 functions as the Nucleophile in the catalytic mechanism. H127 is an active-site residue.

This sequence belongs to the peptidase S14 family. In terms of assembly, fourteen ClpP subunits assemble into 2 heptameric rings which stack back to back to give a disk-like structure with a central cavity, resembling the structure of eukaryotic proteasomes.

The protein localises to the cytoplasm. The enzyme catalyses Hydrolysis of proteins to small peptides in the presence of ATP and magnesium. alpha-casein is the usual test substrate. In the absence of ATP, only oligopeptides shorter than five residues are hydrolyzed (such as succinyl-Leu-Tyr-|-NHMec, and Leu-Tyr-Leu-|-Tyr-Trp, in which cleavage of the -Tyr-|-Leu- and -Tyr-|-Trp bonds also occurs).. Its function is as follows. Cleaves peptides in various proteins in a process that requires ATP hydrolysis. Has a chymotrypsin-like activity. Plays a major role in the degradation of misfolded proteins. The protein is ATP-dependent Clp protease proteolytic subunit 1 of Mesorhizobium japonicum (strain LMG 29417 / CECT 9101 / MAFF 303099) (Mesorhizobium loti (strain MAFF 303099)).